A 445-amino-acid polypeptide reads, in one-letter code: ATP-dependent protease ATPase subunit HslU (445 aa).

ATP is bound by residues V18, 60–65 (GVGKTE), D254, E319, and R391.

Belongs to the ClpX chaperone family. HslU subfamily. As to quaternary structure, a double ring-shaped homohexamer of HslV is capped on each side by a ring-shaped HslU homohexamer. The assembly of the HslU/HslV complex is dependent on binding of ATP.

It localises to the cytoplasm. ATPase subunit of a proteasome-like degradation complex; this subunit has chaperone activity. The binding of ATP and its subsequent hydrolysis by HslU are essential for unfolding of protein substrates subsequently hydrolyzed by HslV. HslU recognizes the N-terminal part of its protein substrates and unfolds these before they are guided to HslV for hydrolysis. The sequence is that of ATP-dependent protease ATPase subunit HslU from Alcanivorax borkumensis (strain ATCC 700651 / DSM 11573 / NCIMB 13689 / SK2).